The primary structure comprises 269 residues: Histone deacetylase HDT1 (269 aa).

The tract at residues 97–269 (PFEEEEDDED…HSKAKHSAGK (173 aa)) is disordered. Acidic residues-rich tracts occupy residues 98 to 115 (FEEEEDDEDDYDESDEDI) and 153 to 179 (KDDEDESSDDDDSDMGEDEDDSDDSEE). Residues 228–238 (PSKQASKTPKS) show a composition bias toward polar residues. Residues 242–265 (HHCKPCNRSFGSEGALDSHSKAKH) form a C2H2-type zinc finger.

Belongs to the histone deacetylase HD2 family. In terms of tissue distribution, predominantly expressed in ovaries. Accumulates predominantly in the micropylar region of the ovule's integument.

Its subcellular location is the nucleus. The protein localises to the nucleolus. In terms of biological role, mediates the deacetylation of lysine residues on the N-terminal part of the core histones (H2A, H2B, H3 and H4). Histone deacetylation gives a tag for epigenetic repression and plays an important role in transcriptional regulation, cell cycle progression and developmental events. The polypeptide is Histone deacetylase HDT1 (HDT1) (Solanum chacoense (Chaco potato)).